We begin with the raw amino-acid sequence, 198 residues long: IMP cyclohydrolase (198 aa).

Belongs to the archaeal IMP cyclohydrolase family.

It catalyses the reaction IMP + H2O = 5-formamido-1-(5-phospho-D-ribosyl)imidazole-4-carboxamide. The protein operates within purine metabolism; IMP biosynthesis via de novo pathway; IMP from 5-formamido-1-(5-phospho-D-ribosyl)imidazole-4-carboxamide: step 1/1. Its function is as follows. Catalyzes the cyclization of 5-formylamidoimidazole-4-carboxamide ribonucleotide to IMP. This is IMP cyclohydrolase from Methanopyrus kandleri (strain AV19 / DSM 6324 / JCM 9639 / NBRC 100938).